The sequence spans 407 residues: Zinc finger protein 174 (407 aa).

Residues 1-20 (MAAKMEITLSSNTEASSKQE) are disordered. Residue K26 forms a Glycyl lysine isopeptide (Lys-Gly) (interchain with G-Cter in SUMO2) linkage. Residues 59 to 124 (GPQEALSQLR…KEIVTLVEDF (66 aa)) enclose the SCAN box domain. The tract at residues 150-270 (GSQLGEQELP…RRQVSSPNAQ (121 aa)) is disordered. K204 participates in a covalent cross-link: Glycyl lysine isopeptide (Lys-Gly) (interchain with G-Cter in SUMO2). Over residues 211–221 (PRMRSDNKENP) the composition is skewed to basic and acidic residues. Glycyl lysine isopeptide (Lys-Gly) (interchain with G-Cter in SUMO2) cross-links involve residues K230 and K271. 3 C2H2-type zinc fingers span residues 326 to 348 (YKCDDCGKSFTWNSELKRHKRVH), 354 to 376 (YTCGECGNCFGRQSTLKLHQRIH), and 382 to 405 (YQCGQCGKSFRQSSNLHQHHRLHH).

This sequence belongs to the krueppel C2H2-type zinc-finger protein family. In terms of assembly, homodimer. As to expression, expressed in a variety of organs, but most strongly in adult testis and ovary followed by small intestine, colon, prostate, thymus, spleen, pancreas, skeletal muscle, heart, brain and kidney. Also expressed in umbilical vein endothelial cells, foreskin fibroblast and Hep-G2 cells.

The protein resides in the nucleus. Its function is as follows. Transcriptional repressor. The protein is Zinc finger protein 174 (ZNF174) of Homo sapiens (Human).